The following is a 54-amino-acid chain: Hydrophobic protein RCI2B (54 aa).

A run of 2 helical transmembrane segments spans residues Ser-2 to Leu-22 and Ile-32 to Ile-52.

This sequence belongs to the UPF0057 (PMP3) family.

It localises to the membrane. The chain is Hydrophobic protein RCI2B (RCI2B) from Arabidopsis thaliana (Mouse-ear cress).